A 1342-amino-acid chain; its full sequence is DNA-directed RNA polymerase subunit beta (1342 aa).

It belongs to the RNA polymerase beta chain family. In terms of assembly, the RNAP catalytic core consists of 2 alpha, 1 beta, 1 beta' and 1 omega subunit. When a sigma factor is associated with the core the holoenzyme is formed, which can initiate transcription.

The catalysed reaction is RNA(n) + a ribonucleoside 5'-triphosphate = RNA(n+1) + diphosphate. DNA-dependent RNA polymerase catalyzes the transcription of DNA into RNA using the four ribonucleoside triphosphates as substrates. This chain is DNA-directed RNA polymerase subunit beta, found in Buchnera aphidicola subsp. Schizaphis graminum (strain Sg).